A 204-amino-acid chain; its full sequence is Holliday junction branch migration complex subunit RuvA (204 aa).

Residues 1 to 63 (MIGWLQGRVL…EDGQFLYGFS (63 aa)) are domain I. Residues 64 to 142 (SFLQRQLFRE…KNDLFLCDES (79 aa)) are domain II. Residues 143 to 152 (ESSRAPIALS) form a flexible linker region. Positions 152-204 (SASEEAIQALIALELAPAEAELWVKKAQKTLAEDADSAALIKTAFALRLQGAK) are domain III.

Belongs to the RuvA family. As to quaternary structure, homotetramer. Forms an RuvA(8)-RuvB(12)-Holliday junction (HJ) complex. HJ DNA is sandwiched between 2 RuvA tetramers; dsDNA enters through RuvA and exits via RuvB. An RuvB hexamer assembles on each DNA strand where it exits the tetramer. Each RuvB hexamer is contacted by two RuvA subunits (via domain III) on 2 adjacent RuvB subunits; this complex drives branch migration. In the full resolvosome a probable DNA-RuvA(4)-RuvB(12)-RuvC(2) complex forms which resolves the HJ.

The protein localises to the cytoplasm. Its function is as follows. The RuvA-RuvB-RuvC complex processes Holliday junction (HJ) DNA during genetic recombination and DNA repair, while the RuvA-RuvB complex plays an important role in the rescue of blocked DNA replication forks via replication fork reversal (RFR). RuvA specifically binds to HJ cruciform DNA, conferring on it an open structure. The RuvB hexamer acts as an ATP-dependent pump, pulling dsDNA into and through the RuvAB complex. HJ branch migration allows RuvC to scan DNA until it finds its consensus sequence, where it cleaves and resolves the cruciform DNA. The chain is Holliday junction branch migration complex subunit RuvA from Dichelobacter nodosus (strain VCS1703A).